The primary structure comprises 204 residues: INSIG protein homolog (204 aa).

A run of 5 helical transmembrane segments spans residues 5–27 (ISEAVVLFLLGAVAALIGDHSHV), 47–64 (FWFPILVGAATASLAELR), 76–97 (ARQALGGVAAVVGTYVTTALVH), 101–118 (VVPVTALVCAAAAITWCV), and 124–145 (GAACGVVIAVIGPAVEIALVQL). Position 26 (histidine 26) interacts with a 1,2-diacyl-sn-glycerol. Tyrosine 150 contacts a 1,2-diacyl-sn-glycerol. Residues 162–179 (PFLAPLYFAFGVVAALLG) traverse the membrane as a helical segment.

This sequence belongs to the INSIG family. Homotrimer.

Its subcellular location is the membrane. Diacylglycerol-binding protein. This is INSIG protein homolog from Mycolicibacterium vanbaalenii (strain DSM 7251 / JCM 13017 / BCRC 16820 / KCTC 9966 / NRRL B-24157 / PYR-1) (Mycobacterium vanbaalenii).